Reading from the N-terminus, the 856-residue chain is Phosphatidylglycerol lysyltransferase (856 aa).

13 helical membrane passes run Ala-7–Ser-27, Leu-51–Val-71, Val-88–Gly-108, Ile-128–Ala-148, Pro-161–Ser-181, Ser-208–Ile-228, Val-235–Phe-255, Ile-280–Ala-300, Ser-342–Ile-362, Ala-375–Ile-395, Phe-420–Val-440, Ile-459–Ile-479, and His-501–Tyr-521.

Belongs to the LPG synthase family.

The protein resides in the cell membrane. It catalyses the reaction L-lysyl-tRNA(Lys) + a 1,2-diacyl-sn-glycero-3-phospho-(1'-sn-glycerol) = a 1,2-diacyl-sn-glycero-3-phospho-1'-(3'-O-L-lysyl)-sn-glycerol + tRNA(Lys). Its function is as follows. Catalyzes the transfer of a lysyl group from L-lysyl-tRNA(Lys) to membrane-bound phosphatidylglycerol (PG), which produces lysylphosphatidylglycerol (LPG), one of the components of the bacterial membrane with a positive net charge. LPG synthesis contributes to the resistance to cationic antimicrobial peptides (CAMPs) and likely protects B.subtilis against its own CAMPs and against those produced by competiting microorganisms (bacteriocins). In fact, the modification of anionic phosphatidylglycerol with positively charged L-lysine results in repulsion of the peptides. In Bacillus subtilis (strain 168), this protein is Phosphatidylglycerol lysyltransferase (mprF).